The chain runs to 696 residues: Polyribonucleotide nucleotidyltransferase (696 aa).

2 residues coordinate Mg(2+): D486 and D492. The KH domain maps to 553 to 612; it reads PRIIVRNIPKDRIGELIGPGGKNVRGISELTGAELYIEDDGRVTISGSNQESAEKAAKMV. Positions 622-690 constitute an S1 motif domain; that stretch reads GKIYEGKVKR…KTGKIDLSRK (69 aa).

It belongs to the polyribonucleotide nucleotidyltransferase family. Mg(2+) serves as cofactor.

It localises to the cytoplasm. It catalyses the reaction RNA(n+1) + phosphate = RNA(n) + a ribonucleoside 5'-diphosphate. Its function is as follows. Involved in mRNA degradation. Catalyzes the phosphorolysis of single-stranded polyribonucleotides processively in the 3'- to 5'-direction. This Leptospira borgpetersenii serovar Hardjo-bovis (strain JB197) protein is Polyribonucleotide nucleotidyltransferase.